A 138-amino-acid chain; its full sequence is Putative membrane protein ORF6 (138 aa).

2 helical membrane passes run 4-20 (LTIIFLLSGLTAYHAVL) and 37-53 (VVVLVMIGALLTLLMTI).

It is found in the membrane. The protein is Putative membrane protein ORF6 (ORF6) of Ictalurid herpesvirus 1 (strain Auburn) (IcHV-1).